Reading from the N-terminus, the 228-residue chain is Uracil-DNA glycosylase (228 aa).

The Proton acceptor role is filled by Asp-64.

This sequence belongs to the uracil-DNA glycosylase (UDG) superfamily. UNG family.

It is found in the cytoplasm. It carries out the reaction Hydrolyzes single-stranded DNA or mismatched double-stranded DNA and polynucleotides, releasing free uracil.. In terms of biological role, excises uracil residues from the DNA which can arise as a result of misincorporation of dUMP residues by DNA polymerase or due to deamination of cytosine. The sequence is that of Uracil-DNA glycosylase from Pectobacterium carotovorum subsp. carotovorum (strain PC1).